The chain runs to 278 residues: S-formylglutathione hydrolase YeiG (278 aa).

Residues Ser145, Asp223, and His256 each act as charge relay system in the active site.

The protein belongs to the esterase D family.

It carries out the reaction S-formylglutathione + H2O = formate + glutathione + H(+). Functionally, serine hydrolase involved in the detoxification of formaldehyde. Hydrolyzes S-formylglutathione to glutathione and formate. The chain is S-formylglutathione hydrolase YeiG (yeiG) from Shigella dysenteriae serotype 1 (strain Sd197).